The chain runs to 443 residues: MMTTTVQKNCWRLDQTMLGLEKPGSSDISSSSTDTSAISPISVSSMPLSPDKEKKKISFVRYNPDIPQIVTSFKGYQKLMYQGYRYNIYQIAPERNFKSWRCVCAKKMHDGQWCKCRAETTMDNKNACTKGSHNHPPRHHVAEIEFIKSQLYSAALENPDHDAGDLVNQASMYLSDGVMFDNKESIKKSLVVARNKDGKPKKPRSKRMMKFEVDDDDENEYKMPKLETDISCFLPFINNMVKVEPPFSHTPTIQIPQPIPTPIQHQQQEQSNLLQPATLNGMNNPWMGMEDHLAMIWAANAMLNPGLDVLSTIAALSKHQQHVQGPSPQQAATAPTTASLSSNLSVSSFTPQMPKEASIAIPAPLQVLNLKDLKPLPPLANIQTSPVIQAANLLLPVAALKKDSSTQTTEEIKVSQCLTSGCGCRVIRICCCDEGVCRRTAAC.

Positions lysine 22–serine 49 are disordered. Low complexity predominate over residues serine 25–serine 42. Residues methionine 46–proline 203 constitute a DNA-binding region (required for DNA-binding). An FLYWCH-type zinc finger spans residues isoleucine 69–histidine 135. The segment at proline 251–serine 271 is disordered.

It is found in the nucleus. Its function is as follows. Putative transcription factor. Binds to specific sequence motif 5'-[TC][AGT]TGCC[GA][AT]-3' in regulatory elements of target genes such as myosin myo-2. May modulate gene expression, perhaps acting in opposition to transcription factor pha-4. Involved in morphogenesis, perhaps especially in formation of the pharynx. Plays roles in molting, feeding and morphology. The sequence is that of FLYWCH-type zinc finger-containing protein peb-1 from Caenorhabditis elegans.